The primary structure comprises 380 residues: Pectinesterase QRT1 (380 aa).

A signal peptide spans 1–26 (MKVEAFIPAVLLLCFGVMLCLKSSCA). Residues Asn74 and Asn137 are each glycosylated (N-linked (GlcNAc...) asparagine). Substrate is bound by residues Thr164 and Gln198. Asp221 serves as the catalytic Proton donor. A glycan (N-linked (GlcNAc...) asparagine) is linked at Asn227. Cys235 and Cys255 are oxidised to a cystine. Catalysis depends on Asp242, which acts as the Nucleophile. Substrate-binding residues include Arg298 and Trp300. The N-linked (GlcNAc...) asparagine glycan is linked to Asn302.

This sequence belongs to the pectinesterase family. Expressed in flower buds, siliques, developing guard cells, floral nectares, at the stigmatic surface, in the hypocotyl-root transition zone and the area of lateral root emergence. Not expressed in mature leaves.

The protein localises to the secreted. Its subcellular location is the cell wall. It carries out the reaction [(1-&gt;4)-alpha-D-galacturonosyl methyl ester](n) + n H2O = [(1-&gt;4)-alpha-D-galacturonosyl](n) + n methanol + n H(+). It participates in glycan metabolism; pectin degradation; 2-dehydro-3-deoxy-D-gluconate from pectin: step 1/5. Functionally, pectinesterase required for cell type-specific pectin degradation to separate microspores. The protein is Pectinesterase QRT1 of Arabidopsis thaliana (Mouse-ear cress).